The sequence spans 185 residues: Ribosome-recycling factor (185 aa).

Belongs to the RRF family.

It localises to the cytoplasm. Functionally, responsible for the release of ribosomes from messenger RNA at the termination of protein biosynthesis. May increase the efficiency of translation by recycling ribosomes from one round of translation to another. This chain is Ribosome-recycling factor, found in Xylella fastidiosa (strain Temecula1 / ATCC 700964).